We begin with the raw amino-acid sequence, 157 residues long: Large ribosomal subunit protein uL11 (157 aa).

It belongs to the universal ribosomal protein uL11 family. As to quaternary structure, part of the ribosomal stalk of the 50S ribosomal subunit. Interacts with L10 and the large rRNA to form the base of the stalk. L10 forms an elongated spine to which L12 dimers bind in a sequential fashion forming a multimeric L10(L12)X complex.

Forms part of the ribosomal stalk which helps the ribosome interact with GTP-bound translation factors. The protein is Large ribosomal subunit protein uL11 of Archaeoglobus fulgidus (strain ATCC 49558 / DSM 4304 / JCM 9628 / NBRC 100126 / VC-16).